Consider the following 122-residue polypeptide: Large ribosomal subunit protein bL12 (122 aa).

This sequence belongs to the bacterial ribosomal protein bL12 family. Homodimer. Part of the ribosomal stalk of the 50S ribosomal subunit. Forms a multimeric L10(L12)X complex, where L10 forms an elongated spine to which 2 to 4 L12 dimers bind in a sequential fashion. Binds GTP-bound translation factors.

In terms of biological role, forms part of the ribosomal stalk which helps the ribosome interact with GTP-bound translation factors. Is thus essential for accurate translation. This is Large ribosomal subunit protein bL12 from Deinococcus radiodurans (strain ATCC 13939 / DSM 20539 / JCM 16871 / CCUG 27074 / LMG 4051 / NBRC 15346 / NCIMB 9279 / VKM B-1422 / R1).